The following is a 632-amino-acid chain: Threonine--tRNA ligase (632 aa).

Positions 1–61 (MPIITLPDGT…KTDANLAIIT (61 aa)) constitute a TGS domain. The tract at residues 242–533 (DHRKIGKIQD…LIEHYEGAYP (292 aa)) is catalytic. The Zn(2+) site is built by Cys-333, His-384, and His-510.

It belongs to the class-II aminoacyl-tRNA synthetase family. In terms of assembly, homodimer. Zn(2+) serves as cofactor.

Its subcellular location is the cytoplasm. The enzyme catalyses tRNA(Thr) + L-threonine + ATP = L-threonyl-tRNA(Thr) + AMP + diphosphate + H(+). In terms of biological role, catalyzes the attachment of threonine to tRNA(Thr) in a two-step reaction: L-threonine is first activated by ATP to form Thr-AMP and then transferred to the acceptor end of tRNA(Thr). Also edits incorrectly charged L-seryl-tRNA(Thr). The protein is Threonine--tRNA ligase of Ruthia magnifica subsp. Calyptogena magnifica.